Here is a 547-residue protein sequence, read N- to C-terminus: Glucose-6-phosphate isomerase 1 (547 aa).

The active-site Proton donor is the Glu353. Residues His384 and Lys512 contribute to the active site.

It belongs to the GPI family.

The protein resides in the cytoplasm. The enzyme catalyses alpha-D-glucose 6-phosphate = beta-D-fructose 6-phosphate. Its pathway is carbohydrate biosynthesis; gluconeogenesis. It functions in the pathway carbohydrate degradation; glycolysis; D-glyceraldehyde 3-phosphate and glycerone phosphate from D-glucose: step 2/4. Functionally, catalyzes the reversible isomerization of glucose-6-phosphate to fructose-6-phosphate. In Chromobacterium violaceum (strain ATCC 12472 / DSM 30191 / JCM 1249 / CCUG 213 / NBRC 12614 / NCIMB 9131 / NCTC 9757 / MK), this protein is Glucose-6-phosphate isomerase 1.